A 274-amino-acid chain; its full sequence is 2,3,4,5-tetrahydropyridine-2,6-dicarboxylate N-succinyltransferase (274 aa).

Belongs to the transferase hexapeptide repeat family.

It localises to the cytoplasm. It carries out the reaction (S)-2,3,4,5-tetrahydrodipicolinate + succinyl-CoA + H2O = (S)-2-succinylamino-6-oxoheptanedioate + CoA. It functions in the pathway amino-acid biosynthesis; L-lysine biosynthesis via DAP pathway; LL-2,6-diaminopimelate from (S)-tetrahydrodipicolinate (succinylase route): step 1/3. The sequence is that of 2,3,4,5-tetrahydropyridine-2,6-dicarboxylate N-succinyltransferase from Klebsiella pneumoniae (strain 342).